A 315-amino-acid polypeptide reads, in one-letter code: Acetyl-coenzyme A carboxylase carboxyl transferase subunit alpha (315 aa).

Positions 35–289 constitute a CoA carboxyltransferase C-terminal domain; sequence KLSKKRFELM…RKAVAAELKI (255 aa).

This sequence belongs to the AccA family. As to quaternary structure, acetyl-CoA carboxylase is a heterohexamer composed of biotin carboxyl carrier protein (AccB), biotin carboxylase (AccC) and two subunits each of ACCase subunit alpha (AccA) and ACCase subunit beta (AccD).

The protein localises to the cytoplasm. The catalysed reaction is N(6)-carboxybiotinyl-L-lysyl-[protein] + acetyl-CoA = N(6)-biotinyl-L-lysyl-[protein] + malonyl-CoA. It functions in the pathway lipid metabolism; malonyl-CoA biosynthesis; malonyl-CoA from acetyl-CoA: step 1/1. Component of the acetyl coenzyme A carboxylase (ACC) complex. First, biotin carboxylase catalyzes the carboxylation of biotin on its carrier protein (BCCP) and then the CO(2) group is transferred by the carboxyltransferase to acetyl-CoA to form malonyl-CoA. This Francisella tularensis subsp. mediasiatica (strain FSC147) protein is Acetyl-coenzyme A carboxylase carboxyl transferase subunit alpha.